The sequence spans 203 residues: Small ribosomal subunit protein uS4 (203 aa).

The S4 RNA-binding domain maps to 93 to 173; the sequence is RRFDNVVFRS…IPSWIQVDKA (81 aa).

It belongs to the universal ribosomal protein uS4 family. Part of the 30S ribosomal subunit. Contacts protein S5. The interaction surface between S4 and S5 is involved in control of translational fidelity.

Functionally, one of the primary rRNA binding proteins, it binds directly to 16S rRNA where it nucleates assembly of the body of the 30S subunit. With S5 and S12 plays an important role in translational accuracy. This chain is Small ribosomal subunit protein uS4, found in Chlorobium phaeobacteroides (strain DSM 266 / SMG 266 / 2430).